The primary structure comprises 223 residues: Protein-L-isoaspartate O-methyltransferase (223 aa).

S70 is a catalytic residue.

The protein belongs to the methyltransferase superfamily. L-isoaspartyl/D-aspartyl protein methyltransferase family.

The protein resides in the cytoplasm. The catalysed reaction is [protein]-L-isoaspartate + S-adenosyl-L-methionine = [protein]-L-isoaspartate alpha-methyl ester + S-adenosyl-L-homocysteine. Catalyzes the methyl esterification of L-isoaspartyl residues in peptides and proteins that result from spontaneous decomposition of normal L-aspartyl and L-asparaginyl residues. It plays a role in the repair and/or degradation of damaged proteins. This chain is Protein-L-isoaspartate O-methyltransferase, found in Methylobacillus flagellatus (strain ATCC 51484 / DSM 6875 / VKM B-1610 / KT).